A 319-amino-acid polypeptide reads, in one-letter code: Protein StrN (319 aa).

The protein operates within antibiotic biosynthesis; streptomycin biosynthesis. This is Protein StrN (strN) from Streptomyces griseus.